Reading from the N-terminus, the 455-residue chain is L-serine dehydratase (455 aa).

The protein belongs to the iron-sulfur dependent L-serine dehydratase family. [4Fe-4S] cluster is required as a cofactor.

The enzyme catalyses L-serine = pyruvate + NH4(+). Its pathway is carbohydrate biosynthesis; gluconeogenesis. The chain is L-serine dehydratase (sdaA) from Haemophilus influenzae (strain ATCC 51907 / DSM 11121 / KW20 / Rd).